The sequence spans 89 residues: MAISKERKDQIIKEFATHEGDTGSTQVQVAVLTADINELNDHLRTHKHDYHSQRGLMKKIGHRRNLLAYLRRTDLPAYRELIQKLGLRR.

The protein belongs to the universal ribosomal protein uS15 family. Part of the 30S ribosomal subunit. Forms a bridge to the 50S subunit in the 70S ribosome, contacting the 23S rRNA.

One of the primary rRNA binding proteins, it binds directly to 16S rRNA where it helps nucleate assembly of the platform of the 30S subunit by binding and bridging several RNA helices of the 16S rRNA. Functionally, forms an intersubunit bridge (bridge B4) with the 23S rRNA of the 50S subunit in the ribosome. This Limosilactobacillus reuteri (strain DSM 20016) (Lactobacillus reuteri) protein is Small ribosomal subunit protein uS15.